The chain runs to 167 residues: Protein-export protein SecB (167 aa).

The segment at 1–20 (MASNDDAPVGAANGNGNTGA) is disordered.

Belongs to the SecB family. As to quaternary structure, homotetramer, a dimer of dimers. One homotetramer interacts with 1 SecA dimer.

It localises to the cytoplasm. Functionally, one of the proteins required for the normal export of preproteins out of the cell cytoplasm. It is a molecular chaperone that binds to a subset of precursor proteins, maintaining them in a translocation-competent state. It also specifically binds to its receptor SecA. This chain is Protein-export protein SecB, found in Mesorhizobium japonicum (strain LMG 29417 / CECT 9101 / MAFF 303099) (Mesorhizobium loti (strain MAFF 303099)).